A 155-amino-acid polypeptide reads, in one-letter code: NADH-ubiquinone oxidoreductase chain 6 (155 aa).

Transmembrane regions (helical) follow at residues 10 to 30 (ILAI…VLFV), 43 to 63 (LMGI…FLFI), 75 to 95 (GTIH…LDLS), and 133 to 153 (AIPM…AIAI).

The protein belongs to the complex I subunit 6 family.

The protein resides in the mitochondrion membrane. It catalyses the reaction a ubiquinone + NADH + 5 H(+)(in) = a ubiquinol + NAD(+) + 4 H(+)(out). Functionally, core subunit of the mitochondrial membrane respiratory chain NADH dehydrogenase (Complex I) that is believed to belong to the minimal assembly required for catalysis. Complex I functions in the transfer of electrons from NADH to the respiratory chain. The immediate electron acceptor for the enzyme is believed to be ubiquinone. The chain is NADH-ubiquinone oxidoreductase chain 6 (ND6) from Candida parapsilosis (Yeast).